A 183-amino-acid polypeptide reads, in one-letter code: Ubiquinol-cytochrome c reductase iron-sulfur subunit (183 aa).

A helical membrane pass occupies residues 21 to 41 (LIYGTTAVGAVGVALAVWPFI). Residues 88-181 (IVVARAVDPA…YAFTDDTTVL (94 aa)) form the Rieske domain. [2Fe-2S] cluster contacts are provided by C121, H123, C145, and H148. A disulfide bond links C126 and C147.

It belongs to the Rieske iron-sulfur protein family. In terms of assembly, the main subunits of complex b-c1 are: cytochrome b, cytochrome c1 and the Rieske protein. [2Fe-2S] cluster serves as cofactor.

The protein resides in the cell inner membrane. The enzyme catalyses a quinol + 2 Fe(III)-[cytochrome c](out) = a quinone + 2 Fe(II)-[cytochrome c](out) + 2 H(+)(out). Functionally, component of the ubiquinol-cytochrome c reductase complex (complex III or cytochrome b-c1 complex), which is a respiratory chain that generates an electrochemical potential coupled to ATP synthesis. The chain is Ubiquinol-cytochrome c reductase iron-sulfur subunit (petA) from Rhodospirillum rubrum.